Reading from the N-terminus, the 224-residue chain is 2,5-diamino-6-ribosylamino-4(3H)-pyrimidinone 5'-phosphate reductase (224 aa).

NADP(+) contacts are provided by residues Gly-16, Thr-57, Asp-61, 83–86 (SKLR), Val-134, and 156–159 (GGTL).

It belongs to the HTP reductase family. Homodimer.

It catalyses the reaction 2,5-diamino-6-(1-D-ribitylamino)pyrimidin-4(3H)-one 5'-phosphate + NADP(+) = 2,5-diamino-6-(1-D-ribosylamino)pyrimidin-4(3H)-one 5'-phosphate + NADPH + H(+). It carries out the reaction 2,5-diamino-6-(1-D-ribitylamino)pyrimidin-4(3H)-one 5'-phosphate + NAD(+) = 2,5-diamino-6-(1-D-ribosylamino)pyrimidin-4(3H)-one 5'-phosphate + NADH + H(+). The protein operates within cofactor biosynthesis; riboflavin biosynthesis. In terms of biological role, catalyzes an early step in riboflavin biosynthesis, the NAD(P)H-dependent reduction of the ribose side chain of 2,5-diamino-6-ribosylamino-4(3H)-pyrimidinone 5'-phosphate, yielding 2,5-diamino-6-ribitylamino-4(3H)-pyrimidinone 5'-phosphate. The beta anomer is the authentic substrate, and the alpha anomer can serve as substrate subsequent to spontaneous anomerization. NADPH and NADH function equally well as the reductants. Does not catalyze the reduction of 5-amino-6-(5-phospho-D-ribosylamino)uracil to 5-amino-6-(5-phospho-D-ribitylamino)uracil. In Methanocaldococcus jannaschii (strain ATCC 43067 / DSM 2661 / JAL-1 / JCM 10045 / NBRC 100440) (Methanococcus jannaschii), this protein is 2,5-diamino-6-ribosylamino-4(3H)-pyrimidinone 5'-phosphate reductase (arfC).